We begin with the raw amino-acid sequence, 696 residues long: Polyphosphate kinase (696 aa).

Residue Asn-45 participates in ATP binding. Positions 373 and 403 each coordinate Mg(2+). Residues 428–462 (PGLKIHSKLLMISRREGDDIIRYAHIGTGNFHEKT) form the PLD phosphodiesterase domain. His-433 (phosphohistidine intermediate) is an active-site residue. The ATP site is built by Tyr-466, Arg-562, and His-590.

It belongs to the polyphosphate kinase 1 (PPK1) family. The cofactor is Mg(2+). An intermediate of this reaction is the autophosphorylated ppk in which a phosphate is covalently linked to a histidine residue through a N-P bond.

It carries out the reaction [phosphate](n) + ATP = [phosphate](n+1) + ADP. Its function is as follows. Catalyzes the reversible transfer of the terminal phosphate of ATP to form a long-chain polyphosphate (polyP). This is Polyphosphate kinase from Vibrio parahaemolyticus serotype O3:K6 (strain RIMD 2210633).